Here is a 288-residue protein sequence, read N- to C-terminus: 3-methyl-2-oxobutanoate hydroxymethyltransferase (288 aa).

Residues D48 and D87 each coordinate Mg(2+). 3-methyl-2-oxobutanoate is bound by residues 48–49 (DS), D87, and K116. Residue E118 coordinates Mg(2+). The active-site Proton acceptor is E185.

This sequence belongs to the PanB family. Homodecamer; pentamer of dimers. It depends on Mg(2+) as a cofactor.

The protein localises to the cytoplasm. The enzyme catalyses 3-methyl-2-oxobutanoate + (6R)-5,10-methylene-5,6,7,8-tetrahydrofolate + H2O = 2-dehydropantoate + (6S)-5,6,7,8-tetrahydrofolate. It participates in cofactor biosynthesis; coenzyme A biosynthesis. Its function is as follows. Catalyzes the reversible reaction in which hydroxymethyl group from 5,10-methylenetetrahydrofolate is transferred onto alpha-ketoisovalerate to form ketopantoate. This is 3-methyl-2-oxobutanoate hydroxymethyltransferase from Hyperthermus butylicus (strain DSM 5456 / JCM 9403 / PLM1-5).